Reading from the N-terminus, the 94-residue chain is Cell division protein FtsB (94 aa).

The Cytoplasmic segment spans residues 1-3 (MRW). Residues 4-21 (LTVGLLAAIGLLQYPLWV) form a helical membrane-spanning segment. Topologically, residues 22–94 (GKGGWLKVWE…VQIPEKVPGK (73 aa)) are periplasmic. Positions 31–73 (EYDRQLQQQKEVTRKLEIRNAGLDAEVRDLKQGYDAIEERARF) form a coiled coil.

It belongs to the FtsB family. As to quaternary structure, part of a complex composed of FtsB, FtsL and FtsQ.

The protein localises to the cell inner membrane. Functionally, essential cell division protein. May link together the upstream cell division proteins, which are predominantly cytoplasmic, with the downstream cell division proteins, which are predominantly periplasmic. In Dechloromonas aromatica (strain RCB), this protein is Cell division protein FtsB.